A 247-amino-acid chain; its full sequence is 1-(5-phosphoribosyl)-5-[(5-phosphoribosylamino)methylideneamino] imidazole-4-carboxamide isomerase (247 aa).

The active-site Proton acceptor is Asp16. The Proton donor role is filled by Asp135.

The protein belongs to the HisA/HisF family.

The protein localises to the cytoplasm. It catalyses the reaction 1-(5-phospho-beta-D-ribosyl)-5-[(5-phospho-beta-D-ribosylamino)methylideneamino]imidazole-4-carboxamide = 5-[(5-phospho-1-deoxy-D-ribulos-1-ylimino)methylamino]-1-(5-phospho-beta-D-ribosyl)imidazole-4-carboxamide. It functions in the pathway amino-acid biosynthesis; L-histidine biosynthesis; L-histidine from 5-phospho-alpha-D-ribose 1-diphosphate: step 4/9. This chain is 1-(5-phosphoribosyl)-5-[(5-phosphoribosylamino)methylideneamino] imidazole-4-carboxamide isomerase, found in Paenarthrobacter aurescens (strain TC1).